The sequence spans 160 residues: Ribosomal RNA large subunit methyltransferase H (160 aa).

2 residues coordinate S-adenosyl-L-methionine: leucine 76 and glycine 108.

It belongs to the RNA methyltransferase RlmH family. As to quaternary structure, homodimer.

It is found in the cytoplasm. It catalyses the reaction pseudouridine(1915) in 23S rRNA + S-adenosyl-L-methionine = N(3)-methylpseudouridine(1915) in 23S rRNA + S-adenosyl-L-homocysteine + H(+). Its function is as follows. Specifically methylates the pseudouridine at position 1915 (m3Psi1915) in 23S rRNA. The sequence is that of Ribosomal RNA large subunit methyltransferase H from Rhodopseudomonas palustris (strain BisB18).